A 59-amino-acid polypeptide reads, in one-letter code: MAKTIKVTQVRSSIARLPKHKATLRGLGLRRINHTVELIDTPAIRGMINQVSYMVKVEE.

It belongs to the universal ribosomal protein uL30 family. In terms of assembly, part of the 50S ribosomal subunit.

The chain is Large ribosomal subunit protein uL30 from Histophilus somni (strain 129Pt) (Haemophilus somnus).